The following is a 978-amino-acid chain: Monofunctional C1-tetrahydrofolate synthase, mitochondrial (978 aa).

Residues 1–10 (MGTRLPLVLR) are compositionally biased toward low complexity. A mitochondrion-targeting transit peptide spans 1-31 (MGTRLPLVLRQLRRPPQPPGPPRRLRVPCRA). The segment at 1–71 (MGTRLPLVLR…SPGGRTPAAR (71 aa)) is disordered. Residues 31–348 (ASSGGGGGGG…REQQHRRWRL (318 aa)) form a methylenetetrahydrofolate dehydrogenase and cyclohydrolase region. Residues 33-45 (SGGGGGGGGGREG) show a composition bias toward gly residues. Residue Lys-189 is modified to N6-acetyllysine; alternate. The residue at position 189 (Lys-189) is an N6-succinyllysine; alternate. The segment at 349 to 978 (HCLKLQPLSP…TETEQVKGLF (630 aa)) is formyltetrahydrofolate synthetase. Position 357 is a phosphoserine (Ser-357). 423 to 430 (TPLGEGKS) is a binding site for ATP. Lys-596 carries the post-translational modification N6-succinyllysine.

It in the N-terminal section; belongs to the tetrahydrofolate dehydrogenase/cyclohydrolase family. The protein in the C-terminal section; belongs to the formate--tetrahydrofolate ligase family. In terms of assembly, homodimer. As to expression, detected in most tissues, highest expression found in placenta, thymus and brain. Low expression is found in liver and skeletal muscle. Up-regulated in colon adenocarcinoma.

Its subcellular location is the mitochondrion. The catalysed reaction is (6S)-5,6,7,8-tetrahydrofolate + formate + ATP = (6R)-10-formyltetrahydrofolate + ADP + phosphate. The protein operates within one-carbon metabolism; tetrahydrofolate interconversion. In terms of biological role, may provide the missing metabolic reaction required to link the mitochondria and the cytoplasm in the mammalian model of one-carbon folate metabolism complementing thus the enzymatic activities of MTHFD2. In Homo sapiens (Human), this protein is Monofunctional C1-tetrahydrofolate synthase, mitochondrial.